We begin with the raw amino-acid sequence, 256 residues long: Glucosamine-6-phosphate deaminase (256 aa).

The active-site Proton acceptor; for enolization step is the Asp68. The For ring-opening step role is filled by Asn137. Catalysis depends on His139, which acts as the Proton acceptor; for ring-opening step. The active-site For ring-opening step is the Glu144.

The protein belongs to the glucosamine/galactosamine-6-phosphate isomerase family. NagB subfamily.

The enzyme catalyses alpha-D-glucosamine 6-phosphate + H2O = beta-D-fructose 6-phosphate + NH4(+). It functions in the pathway amino-sugar metabolism; N-acetylneuraminate degradation; D-fructose 6-phosphate from N-acetylneuraminate: step 5/5. In terms of biological role, catalyzes the reversible isomerization-deamination of glucosamine 6-phosphate (GlcN6P) to form fructose 6-phosphate (Fru6P) and ammonium ion. The polypeptide is Glucosamine-6-phosphate deaminase (Mycoplasmopsis pulmonis (strain UAB CTIP) (Mycoplasma pulmonis)).